Here is an 857-residue protein sequence, read N- to C-terminus: DNA mismatch repair protein MutS (857 aa).

ATP is bound at residue Gly608–Ser615.

It belongs to the DNA mismatch repair MutS family.

This protein is involved in the repair of mismatches in DNA. It is possible that it carries out the mismatch recognition step. This protein has a weak ATPase activity. The polypeptide is DNA mismatch repair protein MutS (Lacticaseibacillus casei (strain BL23) (Lactobacillus casei)).